The primary structure comprises 169 residues: Translationally-controlled tumor protein homolog (169 aa).

One can recognise a TCTP domain in the interval 1–169 (MLIYKDILTG…WKHGLEEMKV (169 aa)).

Belongs to the TCTP family.

It is found in the cytoplasm. Its subcellular location is the cytoskeleton. Involved in protein synthesis. Involved in microtubule stabilization. The protein is Translationally-controlled tumor protein homolog of Alternaria alternata (Alternaria rot fungus).